The following is a 137-amino-acid chain: Nucleoside diphosphate kinase (137 aa).

K9, F57, R85, T91, R102, and N112 together coordinate ATP. Residue H115 is the Pros-phosphohistidine intermediate of the active site.

This sequence belongs to the NDK family. In terms of assembly, homotetramer. Mg(2+) is required as a cofactor.

It localises to the cytoplasm. It catalyses the reaction a 2'-deoxyribonucleoside 5'-diphosphate + ATP = a 2'-deoxyribonucleoside 5'-triphosphate + ADP. The enzyme catalyses a ribonucleoside 5'-diphosphate + ATP = a ribonucleoside 5'-triphosphate + ADP. Functionally, major role in the synthesis of nucleoside triphosphates other than ATP. The ATP gamma phosphate is transferred to the NDP beta phosphate via a ping-pong mechanism, using a phosphorylated active-site intermediate. This chain is Nucleoside diphosphate kinase, found in Campylobacter hominis (strain ATCC BAA-381 / DSM 21671 / CCUG 45161 / LMG 19568 / NCTC 13146 / CH001A).